Consider the following 382-residue polypeptide: Anhydro-N-acetylmuramic acid kinase (382 aa).

9 to 16 (GTSLDGID) provides a ligand contact to ATP.

It belongs to the anhydro-N-acetylmuramic acid kinase family.

It carries out the reaction 1,6-anhydro-N-acetyl-beta-muramate + ATP + H2O = N-acetyl-D-muramate 6-phosphate + ADP + H(+). It functions in the pathway amino-sugar metabolism; 1,6-anhydro-N-acetylmuramate degradation. Its pathway is cell wall biogenesis; peptidoglycan recycling. Catalyzes the specific phosphorylation of 1,6-anhydro-N-acetylmuramic acid (anhMurNAc) with the simultaneous cleavage of the 1,6-anhydro ring, generating MurNAc-6-P. Is required for the utilization of anhMurNAc either imported from the medium or derived from its own cell wall murein, and thus plays a role in cell wall recycling. The sequence is that of Anhydro-N-acetylmuramic acid kinase from Bacillus cereus (strain AH820).